The sequence spans 103 residues: Small ribosomal subunit protein uS10 (103 aa).

Belongs to the universal ribosomal protein uS10 family. Part of the 30S ribosomal subunit.

Involved in the binding of tRNA to the ribosomes. The protein is Small ribosomal subunit protein uS10 of Cutibacterium acnes (strain DSM 16379 / KPA171202) (Propionibacterium acnes).